Consider the following 206-residue polypeptide: Ribonuclease HII (206 aa).

The 188-residue stretch at 19–206 folds into the RNase H type-2 domain; the sequence is ALIAGVDEVG…GPVKRALGIE (188 aa). Positions 25, 26, and 117 each coordinate a divalent metal cation.

Belongs to the RNase HII family. The cofactor is Mn(2+). Mg(2+) serves as cofactor.

The protein localises to the cytoplasm. It carries out the reaction Endonucleolytic cleavage to 5'-phosphomonoester.. Its function is as follows. Endonuclease that specifically degrades the RNA of RNA-DNA hybrids. This is Ribonuclease HII from Vibrio cholerae serotype O1 (strain M66-2).